We begin with the raw amino-acid sequence, 297 residues long: 4-diphosphocytidyl-2-C-methyl-D-erythritol kinase (297 aa).

The active site involves K10. 94 to 104 (PVAAGLAGGSS) provides a ligand contact to ATP. D136 is a catalytic residue.

It belongs to the GHMP kinase family. IspE subfamily.

It carries out the reaction 4-CDP-2-C-methyl-D-erythritol + ATP = 4-CDP-2-C-methyl-D-erythritol 2-phosphate + ADP + H(+). The protein operates within isoprenoid biosynthesis; isopentenyl diphosphate biosynthesis via DXP pathway; isopentenyl diphosphate from 1-deoxy-D-xylulose 5-phosphate: step 3/6. In terms of biological role, catalyzes the phosphorylation of the position 2 hydroxy group of 4-diphosphocytidyl-2C-methyl-D-erythritol. This chain is 4-diphosphocytidyl-2-C-methyl-D-erythritol kinase, found in Shouchella clausii (strain KSM-K16) (Alkalihalobacillus clausii).